The sequence spans 158 residues: N-alpha-acetyltransferase RimI (158 aa).

One can recognise an N-acetyltransferase domain in the interval 8–155 (VTIGALTRAD…DAYTMRRDSG (148 aa)).

It belongs to the acetyltransferase family. RimI subfamily. In terms of assembly, monomer. Interacts with TsaD. Interacts with GroS/GroES.

It catalyses the reaction N-terminal L-methionyl-L-alanyl-[protein] + acetyl-CoA = N-terminal N(alpha)-acetyl-L-methionyl-L-alanyl-[protein] + CoA + H(+). The enzyme catalyses N-terminal L-methionyl-L-seryl-[protein] + acetyl-CoA = N-terminal N(alpha)-acetyl-L-methionyl-L-seryl-[protein] + CoA + H(+). It carries out the reaction N-terminal L-methionyl-L-valyl-[protein] + acetyl-CoA = N-terminal N(alpha)-acetyl-L-methionyl-L-valyl-[protein] + CoA + H(+). The catalysed reaction is N-terminal L-methionyl-L-threonyl-[protein] + acetyl-CoA = N-terminal N(alpha)-acetyl-L-methionyl-L-threonyl-[protein] + CoA + H(+). It catalyses the reaction N-terminal L-methionyl-L-lysyl-[protein] + acetyl-CoA = N-terminal N(alpha)-acetyl-L-methionyl-L-lysyl-[protein] + CoA + H(+). The enzyme catalyses N-terminal L-methionyl-L-leucyl-[protein] + acetyl-CoA = N-terminal N(alpha)-acetyl-L-methionyl-L-leucyl-[protein] + CoA + H(+). It carries out the reaction N-terminal L-methionyl-L-phenylalanyl-[protein] + acetyl-CoA = N-terminal N(alpha)-acetyl-L-methionyl-L-phenylalanyl-[protein] + CoA + H(+). The catalysed reaction is N-terminal L-methionyl-L-tyrosyl-[protein] + acetyl-CoA = N-terminal N(alpha)-acetyl-L-methionyl-L-tyrosyl-[protein] + CoA + H(+). It catalyses the reaction N-terminal glycyl-[protein] + acetyl-CoA = N-terminal N(alpha)-acetylglycyl-[protein] + CoA + H(+). The enzyme catalyses N-terminal L-alanyl-[protein] + acetyl-CoA = N-terminal N(alpha)-acetyl-L-alanyl-[protein] + CoA + H(+). It carries out the reaction N-terminal L-seryl-[protein] + acetyl-CoA = N-terminal N(alpha)-acetyl-L-seryl-[protein] + CoA + H(+). The catalysed reaction is N-terminal L-valyl-[protein] + acetyl-CoA = N-terminal N(alpha)-acetyl-L-valyl-[protein] + CoA + H(+). It catalyses the reaction N-terminal L-cysteinyl-[protein] + acetyl-CoA = N-terminal N(alpha)-acetyl-L-cysteinyl-[protein] + CoA + H(+). The enzyme catalyses N-terminal L-threonyl-[protein] + acetyl-CoA = N-terminal N(alpha)-acetyl-L-threonyl-[protein] + CoA + H(+). In terms of biological role, N-alpha-acetyltransferase that specifically mediates the acetylation of N-terminal residues. Able to mediate acetylation of a wide variety of N-terminal residues, with preference for hydrophobic N-termini. Acetylates GroS/GroES and GroEL1. Able to acetylate the ribosomal protein bS18, but it is unclear whether it acetylates its N-terminal alanine residue. In Mycobacterium tuberculosis (strain ATCC 25618 / H37Rv), this protein is N-alpha-acetyltransferase RimI.